Consider the following 560-residue polypeptide: N-acetylglucosamine-6-sulfatase (560 aa).

The tract at residues 1–25 (MRLLSLAPDRPRRGGPRHLTSGSPA) is disordered. The N-terminal stretch at 1–48 (MRLLSLAPDRPRRGGPRHLTSGSPALPPPPPLLLLLLLLGGCLGVSGA) is a signal peptide. Asp-63, Asp-64, and Cys-99 together coordinate Ca(2+). Cys-99 acts as the Nucleophile in catalysis. Cys-99 carries the 3-oxoalanine (Cys) modification. 7 N-linked (GlcNAc...) asparagine glycosylation sites follow: Asn-119, Asn-125, Asn-191, Asn-206, Asn-218, Asn-287, and Asn-325. Positions 334 and 335 each coordinate Ca(2+). N-linked (GlcNAc...) asparagine glycosylation is found at Asn-370, Asn-395, Asn-413, Asn-430, Asn-457, and Asn-488. A Phosphoserine modification is found at Ser-549.

Belongs to the sulfatase family. The cofactor is Ca(2+). The conversion to 3-oxoalanine (also known as C-formylglycine, FGly), of a serine or cysteine residue in prokaryotes and of a cysteine residue in eukaryotes, is critical for catalytic activity.

The protein localises to the lysosome. The catalysed reaction is Hydrolysis of the 6-sulfate groups of the N-acetyl-D-glucosamine 6-sulfate units of heparan sulfate and keratan sulfate.. Functionally, hydrolyzes 6-sulfate groups in N-acetyl-d-glucosaminide units of heparin sulfate and keratan sulfate. The chain is N-acetylglucosamine-6-sulfatase (GNS) from Bos taurus (Bovine).